A 397-amino-acid chain; its full sequence is uncharacterized protein (397 aa).

4 consecutive transmembrane segments (helical) span residues 142 to 162 (WETIGTFTVSGLLVAVSVGIA), 191 to 211 (SQLLFEHPFMALGLIFGSVVL), 242 to 258 (ALTGMVSLLALSGTYFL), and 260 to 280 (APWLDPFFGCLVSIVVFSAGF).

This sequence belongs to the cation diffusion facilitator (CDF) transporter (TC 2.A.4) family. SLC30A subfamily.

The protein localises to the membrane. This is an uncharacterized protein from Schizosaccharomyces pombe (strain 972 / ATCC 24843) (Fission yeast).